The primary structure comprises 349 residues: Anthranilate phosphoribosyltransferase (349 aa).

Residues Gly-82, 85 to 86 (GD), 92 to 95 (NVST), 110 to 118 (KHGNRAVSG), and Ser-122 contribute to the 5-phospho-alpha-D-ribose 1-diphosphate site. Anthranilate is bound at residue Gly-82. Ser-94 is a binding site for Mg(2+). Residue Asn-113 participates in anthranilate binding. Arg-168 contributes to the anthranilate binding site. Mg(2+) is bound by residues Asp-227 and Glu-228.

It belongs to the anthranilate phosphoribosyltransferase family. Homodimer. It depends on Mg(2+) as a cofactor.

It catalyses the reaction N-(5-phospho-beta-D-ribosyl)anthranilate + diphosphate = 5-phospho-alpha-D-ribose 1-diphosphate + anthranilate. It participates in amino-acid biosynthesis; L-tryptophan biosynthesis; L-tryptophan from chorismate: step 2/5. Catalyzes the transfer of the phosphoribosyl group of 5-phosphorylribose-1-pyrophosphate (PRPP) to anthranilate to yield N-(5'-phosphoribosyl)-anthranilate (PRA). This Pseudomonas putida (strain ATCC 47054 / DSM 6125 / CFBP 8728 / NCIMB 11950 / KT2440) protein is Anthranilate phosphoribosyltransferase.